Here is a 79-residue protein sequence, read N- to C-terminus: Cell division protein ZapB (79 aa).

A coiled-coil region spans residues 4 to 78 (EVFEKLEAKV…LRALLGKMEE (75 aa)).

It belongs to the ZapB family. In terms of assembly, homodimer. The ends of the coiled-coil dimer bind to each other, forming polymers. Interacts with FtsZ.

The protein localises to the cytoplasm. Functionally, non-essential, abundant cell division factor that is required for proper Z-ring formation. It is recruited early to the divisome by direct interaction with FtsZ, stimulating Z-ring assembly and thereby promoting cell division earlier in the cell cycle. Its recruitment to the Z-ring requires functional FtsA or ZipA. The protein is Cell division protein ZapB of Erwinia tasmaniensis (strain DSM 17950 / CFBP 7177 / CIP 109463 / NCPPB 4357 / Et1/99).